Here is a 150-residue protein sequence, read N- to C-terminus: Large ribosomal subunit protein uL15 (150 aa).

Residues 1-52 (MITLNTLKDSTRKRKPRKRVGRGIGSKHGKTCGRGEKGAGARSGYKRRLGKE) form a disordered region. Over residues 11–31 (TRKRKPRKRVGRGIGSKHGKT) the composition is skewed to basic residues.

The protein belongs to the universal ribosomal protein uL15 family. As to quaternary structure, part of the 50S ribosomal subunit.

Its function is as follows. Binds to the 23S rRNA. The chain is Large ribosomal subunit protein uL15 from Protochlamydia amoebophila (strain UWE25).